A 613-amino-acid polypeptide reads, in one-letter code: tRNA 5-methylaminomethyl-2-thiouridine biosynthesis bifunctional protein MnmC (613 aa).

Residues 1 to 225 form a tRNA (mnm(5)s(2)U34)-methyltransferase region; that stretch reads MKKAKLIFKD…KREMIKAYLE (225 aa). The FAD-dependent cmnm(5)s(2)U34 oxidoreductase stretch occupies residues 252–613; the sequence is IGAGISSAVL…FLIRKLKKGL (362 aa).

This sequence in the N-terminal section; belongs to the methyltransferase superfamily. tRNA (mnm(5)s(2)U34)-methyltransferase family. In the C-terminal section; belongs to the DAO family. Requires FAD as cofactor.

The protein resides in the cytoplasm. It catalyses the reaction 5-aminomethyl-2-thiouridine(34) in tRNA + S-adenosyl-L-methionine = 5-methylaminomethyl-2-thiouridine(34) in tRNA + S-adenosyl-L-homocysteine + H(+). Its function is as follows. Catalyzes the last two steps in the biosynthesis of 5-methylaminomethyl-2-thiouridine (mnm(5)s(2)U) at the wobble position (U34) in tRNA. Catalyzes the FAD-dependent demodification of cmnm(5)s(2)U34 to nm(5)s(2)U34, followed by the transfer of a methyl group from S-adenosyl-L-methionine to nm(5)s(2)U34, to form mnm(5)s(2)U34. The polypeptide is tRNA 5-methylaminomethyl-2-thiouridine biosynthesis bifunctional protein MnmC (Campylobacter jejuni subsp. jejuni serotype O:6 (strain 81116 / NCTC 11828)).